Consider the following 1091-residue polypeptide: Voltage-dependent calcium channel subunit alpha-2/delta-1 (1091 aa).

The N-terminal stretch at 1-24 is a signal peptide; it reads MAAGCLLALTLTLFQSWLIGPSSE. At 25-1061 the chain is on the extracellular side; it reads EPFPSPVTIK…VLEDYTDCGG (1037 aa). Asn-92 is a glycosylation site (N-linked (GlcNAc...) asparagine). Ser-119 is modified (phosphoserine). 2 N-linked (GlcNAc...) asparagine glycosylation sites follow: Asn-136 and Asn-184. One can recognise a VWFA domain in the interval 252–429; the sequence is DMLILVDVSG…INTQEYLDVL (178 aa). 3 residues coordinate a divalent metal cation: Asp-258, Ser-260, and Ser-262. Residues 258-262 carry the MIDAS-like motif motif; sequence DVSGS. Asn-323 and Asn-347 each carry an N-linked (GlcNAc...) asparagine glycan. An intrachain disulfide couples Cys-403 to Cys-1047. The 92-residue stretch at 445–536 folds into the Cache domain; sequence WTNVYLDALE…QPKNPKSQEP (92 aa). Asn-593, Asn-769, Asn-876, and Asn-973 each carry an N-linked (GlcNAc...) asparagine glycan. The chain crosses the membrane as a helical span at residues 1062 to 1082; it reads VSGLNPSLWSIFGLQFILLWL. Residues 1083-1091 lie on the Cytoplasmic side of the membrane; the sequence is VSGSRHYLW.

The protein belongs to the calcium channel subunit alpha-2/delta family. Dimer formed of alpha-2-1 and delta-1 chains; disulfide-linked. Voltage-dependent calcium channels are multisubunit complexes, consisting of alpha-1 (CACNA1), alpha-2 (CACNA2D), beta (CACNB) and delta (CACNA2D) subunits in a 1:1:1:1 ratio. In terms of processing, proteolytically processed into subunits alpha-2-1 and delta-1 that are disulfide-linked.

It is found in the membrane. Its subcellular location is the cell membrane. Its function is as follows. The alpha-2/delta subunit of voltage-dependent calcium channels regulates calcium current density and activation/inactivation kinetics of the calcium channel. Plays an important role in excitation-contraction coupling. In Rattus norvegicus (Rat), this protein is Voltage-dependent calcium channel subunit alpha-2/delta-1 (Cacna2d1).